A 222-amino-acid polypeptide reads, in one-letter code: UPF0502 protein XCV4380 (222 aa).

Belongs to the UPF0502 family.

This chain is UPF0502 protein XCV4380, found in Xanthomonas euvesicatoria pv. vesicatoria (strain 85-10) (Xanthomonas campestris pv. vesicatoria).